A 270-amino-acid chain; its full sequence is MLSASTVNPSAPWQANLWLRYDRPGHRTRMVECLVQAPLKVQRSFYPDDTGQCQTMLLHTGGGMVGGDRLGYDIVLEAQSDVCFTSASAGKIYRSLGPWSEQTVNLEVRVGASVLWCPQETIIFDQARYQQNFCIKLQEQARFKGWEIVRLGRTARGEKFTQGHWRSSWEIWQGDKLIWGERQQLIGSEQLYESPNALAGFTCLGTYVDLSRSFDQDLVHQAQEIIHSQGRSPQFGLTLTATQGLIARYRGNSTQEVKDIFTQLSQVISP.

This sequence belongs to the UreD family. As to quaternary structure, ureD, UreF and UreG form a complex that acts as a GTP-hydrolysis-dependent molecular chaperone, activating the urease apoprotein by helping to assemble the nickel containing metallocenter of UreC. The UreE protein probably delivers the nickel.

It localises to the cytoplasm. Required for maturation of urease via the functional incorporation of the urease nickel metallocenter. In Synechocystis sp. (strain ATCC 27184 / PCC 6803 / Kazusa), this protein is Urease accessory protein UreD.